A 393-amino-acid polypeptide reads, in one-letter code: S-adenosylmethionine synthase 1 (393 aa).

Glutamate 9 contacts Mg(2+). ATP is bound at residue histidine 15. A K(+)-binding site is contributed by glutamate 43. L-methionine contacts are provided by glutamate 56 and glutamine 99. Residues 167–169 (DGK), 235–238 (SGRF), aspartate 246, 252–253 (RK), alanine 269, lysine 273, and lysine 277 each bind ATP. Residue aspartate 246 participates in L-methionine binding. Lysine 277 provides a ligand contact to L-methionine.

Belongs to the AdoMet synthase family. As to quaternary structure, homotetramer. Mn(2+) is required as a cofactor. Requires Mg(2+) as cofactor. Co(2+) serves as cofactor. It depends on K(+) as a cofactor.

Its subcellular location is the cytoplasm. It carries out the reaction L-methionine + ATP + H2O = S-adenosyl-L-methionine + phosphate + diphosphate. It participates in amino-acid biosynthesis; S-adenosyl-L-methionine biosynthesis; S-adenosyl-L-methionine from L-methionine: step 1/1. Its function is as follows. Catalyzes the formation of S-adenosylmethionine from methionine and ATP. The reaction comprises two steps that are both catalyzed by the same enzyme: formation of S-adenosylmethionine (AdoMet) and triphosphate, and subsequent hydrolysis of the triphosphate. In Picea sitchensis (Sitka spruce), this protein is S-adenosylmethionine synthase 1 (METK1).